The following is a 678-amino-acid chain: THO complex subunit 5 homolog A (678 aa).

Disordered regions lie at residues 1 to 35 (MASD…YSEE) and 294 to 329 (ALFK…VQLD). A Nuclear localization signal motif is present at residues 7 to 10 (KKRK). Over residues 14 to 35 (NRNEDVKRGRHEDQEGRYYSEE) the composition is skewed to basic and acidic residues. Positions 301-314 (DSQDDESDSDAEEE) are enriched in acidic residues.

It belongs to the THOC5 family. Component of the THO subcomplex, which is composed of thoc1, thoc2, thoc3, thoc5, thoc6 and thoc7. Component of the transcription/export (TREX) complex at least composed of alyref/thoc4, ddx39b, sarnp/cip29, chtop and the THO subcomplex. Interacts with thoc7.

The protein localises to the nucleus. The protein resides in the nucleus speckle. Its subcellular location is the cytoplasm. Its function is as follows. Component of the THO subcomplex of the TREX complex which is thought to couple mRNA transcription, processing and nuclear export, and which specifically associates with spliced mRNA and not with unspliced pre-mRNA. Plays a key structural role in the oligomerization of the THO-ddx39b complex. TREX is recruited to spliced mRNAs by a transcription-independent mechanism, binds to mRNA upstream of the exon-junction complex (EJC) and is recruited in a splicing- and cap-dependent manner to a region near the 5' end of the mRNA where it functions in mRNA export to the cytoplasm via the TAP/NXF1 pathway. May be involved in cell differentiation. The polypeptide is THO complex subunit 5 homolog A (thoc5-a) (Xenopus laevis (African clawed frog)).